The following is a 496-amino-acid chain: Putative aldehyde dehydrogenase-like protein C922.07c (496 aa).

241–246 (GSTKVG) serves as a coordination point for NAD(+). Catalysis depends on Glu-263, which acts as the Proton acceptor. Cys-297 serves as the catalytic Nucleophile.

Belongs to the aldehyde dehydrogenase family.

The protein localises to the cytoplasm. It is found in the nucleus. This chain is Putative aldehyde dehydrogenase-like protein C922.07c, found in Schizosaccharomyces pombe (strain 972 / ATCC 24843) (Fission yeast).